The primary structure comprises 59 residues: Potassium channel toxin alpha-KTx 3.5 (59 aa).

The N-terminal stretch at 1 to 22 (MKVFSAVLIILFVCSMIIGINA) is a signal peptide. Intrachain disulfides connect cysteine 29/cysteine 49, cysteine 35/cysteine 54, and cysteine 39/cysteine 56. The interval 47-54 (GKCMNGKC) is interaction with Ca(2+)-activated K(+) channels.

The protein belongs to the short scorpion toxin superfamily. Potassium channel inhibitor family. Alpha-KTx 03 subfamily. As to expression, expressed by the venom gland.

It is found in the secreted. Functionally, has also been shown to inhibit with high potency Kv1.3/KCNA3 and with low potency Kv1.1/KCNA1 and Kv1.2/KCNA2 voltage-gated potassium channels. Also binds and inhibits the molluscan calcium-activated potassium channels KCa (Kd=135 nM). The chain is Potassium channel toxin alpha-KTx 3.5 (KTX2) from Androctonus australis (Sahara scorpion).